A 30-amino-acid polypeptide reads, in one-letter code: Cyclotide mden-I (30 aa).

A cross-link (cyclopeptide (Gly-Asn)) is located at residues 1–30 (GIPCGESCVYIPCITTAIGCSCKNKVCYRN). Cystine bridges form between Cys4–Cys20, Cys8–Cys22, and Cys13–Cys27.

This sequence belongs to the cyclotide family. Bracelet subfamily. Post-translationally, this is a cyclic peptide.

Its function is as follows. Probably participates in a plant defense mechanism. This is Cyclotide mden-I from Melicytus dentatus (Tree violet).